The chain runs to 228 residues: RNA pyrophosphohydrolase (228 aa).

A unknown region spans residues 1–70; sequence MEKRSGIGRL…KQWVKMMNDI (70 aa). The tract at residues 71–228 is rppH domain; that stretch reads VIDKRGFRLG…VLTEFAEFIR (158 aa). Positions 76 to 221 constitute a Nudix hydrolase domain; it reads GFRLGVGMVI…KRDVYQKVLT (146 aa). A Nudix box motif is present at residues 109–130; that stretch reads GGLLPNETLREALNRELDEEVG.

It in the C-terminal section; belongs to the Nudix hydrolase family. RppH subfamily. It depends on a divalent metal cation as a cofactor.

Its function is as follows. Accelerates the degradation of transcripts by removing pyrophosphate from the 5'-end of triphosphorylated RNA, leading to a more labile monophosphorylated state that can stimulate subsequent ribonuclease cleavage. The polypeptide is RNA pyrophosphohydrolase (Coxiella burnetii (strain RSA 493 / Nine Mile phase I)).